The primary structure comprises 117 residues: Large ribosomal subunit protein bL20 (117 aa).

This sequence belongs to the bacterial ribosomal protein bL20 family.

Its function is as follows. Binds directly to 23S ribosomal RNA and is necessary for the in vitro assembly process of the 50S ribosomal subunit. It is not involved in the protein synthesizing functions of that subunit. This chain is Large ribosomal subunit protein bL20, found in Rippkaea orientalis (strain PCC 8801 / RF-1) (Cyanothece sp. (strain PCC 8801)).